The primary structure comprises 257 residues: Glutamate racemase (257 aa).

Substrate contacts are provided by residues 12–13 (DS) and 44–45 (YG). Cys-75 serves as the catalytic Proton donor/acceptor. Substrate is bound at residue 76 to 77 (NT). Cys-176 functions as the Proton donor/acceptor in the catalytic mechanism. 177–178 (TH) provides a ligand contact to substrate.

Belongs to the aspartate/glutamate racemases family.

The enzyme catalyses L-glutamate = D-glutamate. It functions in the pathway cell wall biogenesis; peptidoglycan biosynthesis. Functionally, provides the (R)-glutamate required for cell wall biosynthesis. This is Glutamate racemase from Thermus thermophilus (strain ATCC 27634 / DSM 579 / HB8).